Consider the following 310-residue polypeptide: Elongation factor Ts (310 aa).

The tract at residues 80–83 is involved in Mg(2+) ion dislocation from EF-Tu; it reads TDFV.

It belongs to the EF-Ts family.

It is found in the cytoplasm. In terms of biological role, associates with the EF-Tu.GDP complex and induces the exchange of GDP to GTP. It remains bound to the aminoacyl-tRNA.EF-Tu.GTP complex up to the GTP hydrolysis stage on the ribosome. This chain is Elongation factor Ts, found in Beijerinckia indica subsp. indica (strain ATCC 9039 / DSM 1715 / NCIMB 8712).